We begin with the raw amino-acid sequence, 113 residues long: Large ribosomal subunit protein uL22 (113 aa).

This sequence belongs to the universal ribosomal protein uL22 family. As to quaternary structure, part of the 50S ribosomal subunit.

Its function is as follows. This protein binds specifically to 23S rRNA; its binding is stimulated by other ribosomal proteins, e.g. L4, L17, and L20. It is important during the early stages of 50S assembly. It makes multiple contacts with different domains of the 23S rRNA in the assembled 50S subunit and ribosome. In terms of biological role, the globular domain of the protein is located near the polypeptide exit tunnel on the outside of the subunit, while an extended beta-hairpin is found that lines the wall of the exit tunnel in the center of the 70S ribosome. This chain is Large ribosomal subunit protein uL22, found in Trichlorobacter lovleyi (strain ATCC BAA-1151 / DSM 17278 / SZ) (Geobacter lovleyi).